The sequence spans 441 residues: Ribosomal protein uS12 methylthiotransferase RimO (441 aa).

The region spanning 6 to 116 (PKVGFVSLGC…VMTAVHANLP (111 aa)) is the MTTase N-terminal domain. Residues Cys15, Cys51, Cys80, Cys147, Cys151, and Cys154 each coordinate [4Fe-4S] cluster. The 238-residue stretch at 133–370 (LTPQHYAYLK…MEVQESISAE (238 aa)) folds into the Radical SAM core domain. The TRAM domain occupies 373 to 439 (RRKIGRIETV…GHDLWAAPPA (67 aa)).

This sequence belongs to the methylthiotransferase family. RimO subfamily. [4Fe-4S] cluster is required as a cofactor.

The protein resides in the cytoplasm. It carries out the reaction L-aspartate(89)-[ribosomal protein uS12]-hydrogen + (sulfur carrier)-SH + AH2 + 2 S-adenosyl-L-methionine = 3-methylsulfanyl-L-aspartate(89)-[ribosomal protein uS12]-hydrogen + (sulfur carrier)-H + 5'-deoxyadenosine + L-methionine + A + S-adenosyl-L-homocysteine + 2 H(+). Functionally, catalyzes the methylthiolation of an aspartic acid residue of ribosomal protein uS12. The chain is Ribosomal protein uS12 methylthiotransferase RimO from Methylobacillus flagellatus (strain ATCC 51484 / DSM 6875 / VKM B-1610 / KT).